Consider the following 238-residue polypeptide: Probable transcriptional regulatory protein CPn_0573/CP_0176/CPj0573/CpB0595 (238 aa).

The disordered stretch occupies residues 1–20 (MAGHSKWANTKHRKERADHK). The segment covering 9-20 (NTKHRKERADHK) has biased composition (basic residues).

It belongs to the TACO1 family.

The protein localises to the cytoplasm. The polypeptide is Probable transcriptional regulatory protein CPn_0573/CP_0176/CPj0573/CpB0595 (Chlamydia pneumoniae (Chlamydophila pneumoniae)).